Reading from the N-terminus, the 216-residue chain is Ras-related protein Rab11A (216 aa).

GTP is bound by residues 19 to 27 (GDSGVGKSN), 38 to 44 (CLESKST), 67 to 71 (DTAGQ), 125 to 128 (NKSD), and 155 to 157 (SAL). The Effector region motif lies at 41-49 (SKSTIGVEF). S-geranylgeranyl cysteine attachment occurs at residues Cys213 and Cys214.

It belongs to the small GTPase superfamily. Rab family.

The protein localises to the cell membrane. The sequence is that of Ras-related protein Rab11A (RAB11A) from Nicotiana tabacum (Common tobacco).